Here is a 167-residue protein sequence, read N- to C-terminus: UPF0179 protein Pisl_0688 (167 aa).

This sequence belongs to the UPF0179 family.

This chain is UPF0179 protein Pisl_0688, found in Pyrobaculum islandicum (strain DSM 4184 / JCM 9189 / GEO3).